The chain runs to 578 residues: Peptidyl-prolyl cis-trans isomerase-like 2 (578 aa).

One can recognise a U-box domain in the interval 40 to 114 (RRLPFNFCAA…SDSLGAGLSD (75 aa)). The interval 240–260 (KAREQGGDVNRSSTALTKPTG) is disordered. The PPIase cyclophilin-type domain maps to 321–475 (ATGFARMETN…NKILIKDIVI (155 aa)). The segment at 505–578 (GTDDDKTTWT…GGGFGNFDNW (74 aa)) is disordered. Residues 538–548 (KTTTQQSTPTV) show a composition bias toward polar residues. The segment covering 551 to 560 (ADLEDVDTWE) has biased composition (acidic residues). Gly residues predominate over residues 569–578 (GGGFGNFDNW).

The protein belongs to the cyclophilin-type PPIase family. PPIL2 subfamily.

The protein resides in the nucleus. It catalyses the reaction [protein]-peptidylproline (omega=180) = [protein]-peptidylproline (omega=0). It carries out the reaction S-ubiquitinyl-[E2 ubiquitin-conjugating enzyme]-L-cysteine + [acceptor protein]-L-lysine = [E2 ubiquitin-conjugating enzyme]-L-cysteine + N(6)-ubiquitinyl-[acceptor protein]-L-lysine.. It functions in the pathway protein modification; protein ubiquitination. Its function is as follows. May catalyze the cis-trans isomerization of proline imidic peptide bonds in oligopeptides thereby assisting the folding of proteins. May also function as a chaperone, playing a role in intracellular transport of proteins. May also have a protein ubiquitin ligase activity acting as an E3 ubiquitin protein ligase or as a ubiquitin-ubiquitin ligase promoting elongation of ubiquitin chains on proteins. The polypeptide is Peptidyl-prolyl cis-trans isomerase-like 2 (CYP8) (Gibberella zeae (strain ATCC MYA-4620 / CBS 123657 / FGSC 9075 / NRRL 31084 / PH-1) (Wheat head blight fungus)).